A 250-amino-acid polypeptide reads, in one-letter code: Cell division protein ZapD (250 aa).

Belongs to the ZapD family. As to quaternary structure, interacts with FtsZ.

It is found in the cytoplasm. Cell division factor that enhances FtsZ-ring assembly. Directly interacts with FtsZ and promotes bundling of FtsZ protofilaments, with a reduction in FtsZ GTPase activity. The protein is Cell division protein ZapD of Pectobacterium carotovorum subsp. carotovorum (strain PC1).